A 382-amino-acid polypeptide reads, in one-letter code: MDNLFTFLHEIEDRYARTIFNFHLISCDEIGDIYGLMKERISSEDMFDNIVYNKDIHPAIKKLVYCDIQLTKHIINQNTYPVFNDSSQVKCCHYFDINSDNSNISSRTVEIFESEKSSLVSYIKTTNKKRKVNYGEIKKTVHGGTNANYFSGKKSDEYLSTTVRSNINQPWIKTISKRMRVDIINHSIVTRGKSSILQTIEIIFTNRTCVKIFKDSTMHIILSKDKDEKGCINMIDKLFYVYYNLFLLFEDIIQNEYFKEVANVVNHVLMATALDEKLFLIKKMAEHDVYGVSNFKIGMFNLTFIKSLDHTVFPSLLDEDSKIKFFKGKKLNIVALRSLEDCTNYVTKSENMIEMMKERSTILNSIDIETESVDRLKELLLK.

Belongs to the poxviruses A23 family. In terms of assembly, heterodimer of a 45 kDa and a 32 kDa subunit.

Its function is as follows. Acts with RNA polymerase to initiate transcription from intermediate gene promoters. The protein is Intermediate transcription factor 3 large subunit (VITF3L) of Monkeypox virus (strain Zaire-96-I-16) (MPX).